The primary structure comprises 471 residues: Argininosuccinate lyase (471 aa).

It belongs to the lyase 1 family. Argininosuccinate lyase subfamily.

It localises to the cytoplasm. It carries out the reaction 2-(N(omega)-L-arginino)succinate = fumarate + L-arginine. It functions in the pathway amino-acid biosynthesis; L-arginine biosynthesis; L-arginine from L-ornithine and carbamoyl phosphate: step 3/3. This chain is Argininosuccinate lyase, found in Acidiphilium cryptum (strain JF-5).